A 146-amino-acid chain; its full sequence is Hemoglobin cathodic subunit beta (146 aa).

The 145-residue stretch at 2-146 (EWSSSERSTI…LIHALSRQYF (145 aa)) folds into the Globin domain. Residues His63 and His92 each contribute to the heme b site.

The protein belongs to the globin family. Heterotetramer of two alpha chains and two beta chains. In terms of tissue distribution, red blood cells.

Functionally, involved in oxygen transport from gills to the various peripheral tissues. The sequence is that of Hemoglobin cathodic subunit beta from Gymnothorax unicolor (Brown moray).